Here is a 469-residue protein sequence, read N- to C-terminus: Cell division protein FtsP (469 aa).

The segment at residues methionine 1–alanine 27 is a signal peptide (tat-type signal).

This sequence belongs to the FtsP family. In terms of processing, predicted to be exported by the Tat system. The position of the signal peptide cleavage has not been experimentally proven.

Its subcellular location is the periplasm. Functionally, cell division protein that is required for growth during stress conditions. May be involved in protecting or stabilizing the divisomal assembly under conditions of stress. The protein is Cell division protein FtsP of Glaesserella parasuis serovar 5 (strain SH0165) (Haemophilus parasuis).